We begin with the raw amino-acid sequence, 41 residues long: Minor histocompatibility protein HB-1 (41 aa).

Residues 9–17 form a loss of recognition by cytotoxic T lymphocyte (CTL) region; it reads EEKRGSLHV.

As to quaternary structure, HB-1 forms a complex with MHC class I HLA-B44. As to expression, expressed in acute lymphoblastic leukemia B-cells and Epstein-Barr virus-transformed B-cells.

Precursor of the histocomplatibility antigen HB-1. More generally, minor histocomplatibility antigens (mHags) refer to immunogenic peptide which, when complexed with MHC, can generate an immune response after recognition by specific T-cells. The peptides are derived from polymorphic intracellular proteins, which are cleaved by normal pathways of antigen processing. The binding of these peptides to MHC class I or class II molecules and its expression on the cell surface can stimulate T-cell responses and thereby trigger graft rejection or graft-versus-host disease (GVHD) after hematopoietic stem cell transplantation from HLA-identical sibling donor. GVHD is a frequent complication after bone marrow transplantation (BMT), due to mismatch of minor histocomplatibility antigen in HLA-matched sibling marrow transplants. HB-1 is presented on the cell surface by MHC class I HLA-B44. This complex specifically elicits donor-cytotoxic T lymphocyte (CTL) reactivity in B-cell acute lymphoblastic leukemia (B-ALL) after treatment by HLA-identical allogenic bone marrow transplantation (BMT). It induces cell recognition and lysis by CTL. However, HB-1 restricted expression in B-ALL cells and not in normal tissues may allow a specific CTL reactivity against B-ALL without the risk of evoking graft-versus-host disease. This Homo sapiens (Human) protein is Minor histocompatibility protein HB-1 (HMHB1).